The sequence spans 525 residues: DNA damage-binding protein cmr1 (525 aa).

Polar residues predominate over residues 34 to 50; it reads TGVFTSNMPRGTSANQS. Disordered stretches follow at residues 34–103, 214–240, and 282–301; these read TGVF…ERAK, DASQEKPTSAVKNEDDEDDEDDDDPDP, and TSSVEKYAPESTSDDVPISG. Positions 83–102 are enriched in basic and acidic residues; that stretch reads EIAKRKADEEYDRRQEEERA. One copy of the WD 1 repeat lies at 182–223; sequence ITPERIYSMTFHPSEAKPVIFAGDKMGHLGILDASQEKPTSA. The segment covering 227-239 has biased composition (acidic residues); that stretch reads EDDEDDEDDDDPD. 5 WD repeats span residues 247–287, 339–379, 384–425, 448–491, and 494–525; these read PHTR…SVEK, LSEK…HTDP, EHQS…SSWK, GRWV…LAQL, and DGITAVPAVAVFHRSKNWVAGGTASGKICLWM.

The protein belongs to the WD repeat DDB2/WDR76 family.

In terms of biological role, DNA-binding protein that binds to both single- and double-stranded DNA. Binds preferentially to UV-damaged DNA. May be involved in DNA-metabolic processes. In Emericella nidulans (strain FGSC A4 / ATCC 38163 / CBS 112.46 / NRRL 194 / M139) (Aspergillus nidulans), this protein is DNA damage-binding protein cmr1.